A 73-amino-acid polypeptide reads, in one-letter code: Carboxysome shell vertex protein CsoS4B (73 aa).

The BMV domain maps to 1–68 (MVCTQRVAGL…TDLTIGGIID (68 aa)).

The protein belongs to the CcmL/EutN family. CsoS4 subfamily. As to quaternary structure, homopentamer.

Its subcellular location is the carboxysome. Its function is as follows. Probably forms vertices in the carboxysome, a polyhedral inclusion where RuBisCO (ribulose bisphosphate carboxylase, cbbL-cbbS) is sequestered. Has been modeled to induce curvature upon insertion into an otherwise flat hexagonal layer of major carboxysome subunits. Has not been identified in purified carboxysomes; it is expected to be present in very low amounts. The sequence is that of Carboxysome shell vertex protein CsoS4B from Prochlorococcus marinus subsp. pastoris (strain CCMP1986 / NIES-2087 / MED4).